Here is a 465-residue protein sequence, read N- to C-terminus: MKPEELKGKVASVIGAGKSGVSAAGLLARAGARPFLSEFGAVSPEAAATLRQLGVPFEEGGHSERVFEAALCIVSPGIPQTVPVIREMHARGIPVVSEIELASWFCPARIIGITGTDGKTTTATLLHRICAAEGERKGFRAFSVGNIGIPFSSEVPGMTAADIAVLELSSYQLEACFDFRPNIAVLTNVTPDHMDRYGGSIEAYATAKYRIHARQGAGDTLIYNHDDPILRAHFDRSEPWPFRLVRLGLRAETLDVAPGDFVSVEDGEIVVRASGSTERLMRVDEIMKPGFRGEHNLYNALSSVAAALAAGVAPETMRGVLAGFGGVEHRQELAGNACGLNWINDSKATSVNALRQALQSVPAGMVLIAGGRDKGNDYSAIADLVREKVACIVAIGESRRKIADAFRGVTPVVEAASLAEAVELARQNARPGASVLFSPACSSFDMFRDFEDRGRQFKQLVRELT.

115-121 (GTDGKTT) provides a ligand contact to ATP.

Belongs to the MurCDEF family.

The protein resides in the cytoplasm. The catalysed reaction is UDP-N-acetyl-alpha-D-muramoyl-L-alanine + D-glutamate + ATP = UDP-N-acetyl-alpha-D-muramoyl-L-alanyl-D-glutamate + ADP + phosphate + H(+). It functions in the pathway cell wall biogenesis; peptidoglycan biosynthesis. Functionally, cell wall formation. Catalyzes the addition of glutamate to the nucleotide precursor UDP-N-acetylmuramoyl-L-alanine (UMA). The protein is UDP-N-acetylmuramoylalanine--D-glutamate ligase of Chlorobaculum tepidum (strain ATCC 49652 / DSM 12025 / NBRC 103806 / TLS) (Chlorobium tepidum).